Reading from the N-terminus, the 160-residue chain is MYSAKNRFVQSVQRLQDFRNMYDYEARLATFADWPFTENCKCTPENMAKAGFVHCPTENEPDVACCFFCLKELEGWEPDDDPWNEHSKRSVNCGFLSLTKCVNDLTMEGFLRLEGDRIKSFYRKFSTVVLQYVEEEMTAATKRLLEYFSNQHQCSIDLDH.

The stretch at glutamine 13 to tryptophan 83 is one BIR repeat. A Phosphothreonine; by CDK1 modification is found at threonine 43. Residues cysteine 66, cysteine 69, histidine 86, and cysteine 93 each coordinate Zn(2+).

Belongs to the IAP family. Component of the CPC at least composed of survivin/birc5, incenp, cdca8/borealin and/or cdca9/dasra-A, and aurkb/aurora-B. Interacts directly with incenp (via N-terminus), and may weakly interact with aurkb (via N-terminus) to stabilize the complex. Interacts with GTP-bound ran in both the S and M phases of the cell cycle. Also found in a complex with ubiquitin-mediated signaling proteins including at least usp9x/xFAM, nploc4/npl4 and ufd1. In terms of processing, ubiquitination is required for centrosome-targeting.

The protein resides in the cytoplasm. It localises to the nucleus. Its subcellular location is the chromosome. The protein localises to the centromere. It is found in the cytoskeleton. The protein resides in the spindle. Functionally, component of the chromosomal passenger complex (CPC), a complex that acts as a key regulator of mitosis. The CPC complex has essential functions at the centromere in ensuring correct chromosome alignment and segregation and is required for chromatin-induced microtubule stabilization and spindle assembly. Stimulates the mitotic kinase activity of aurkb/aurora-B in the CPC. Does not appear to exhibit anti-apoptotic activity. CPC. Does not appear to exhibit anti-apoptotic activity. In Xenopus laevis (African clawed frog), this protein is Baculoviral IAP repeat-containing protein 5.1-B (birc5.1-b).